Consider the following 357-residue polypeptide: Protein pelota homolog (357 aa).

The protein belongs to the eukaryotic release factor 1 family. Pelota subfamily. As to quaternary structure, monomer. It depends on a divalent metal cation as a cofactor.

The protein resides in the cytoplasm. Its function is as follows. May function in recognizing stalled ribosomes, interact with stem-loop structures in stalled mRNA molecules, and effect endonucleolytic cleavage of the mRNA. May play a role in the release non-functional ribosomes and degradation of damaged mRNAs. Has endoribonuclease activity. In Methanocella arvoryzae (strain DSM 22066 / NBRC 105507 / MRE50), this protein is Protein pelota homolog.